The chain runs to 125 residues: DNA-directed RNA polymerases I and III subunit RPAC2 (125 aa).

This sequence belongs to the archaeal Rpo11/eukaryotic RPB11/RPC19 RNA polymerase subunit family. Component of the RNA polymerase I (Pol I) and RNA polymerase III (Pol III) complexes consisting of 14 and 17 subunits, respectively.

The protein resides in the nucleus. In terms of biological role, DNA-dependent RNA polymerase catalyzes the transcription of DNA into RNA using the four ribonucleoside triphosphates as substrates. Common core component of RNA polymerases I and III which synthesize ribosomal RNA precursors and small RNAs, such as 5S rRNA and tRNAs, respectively. This is DNA-directed RNA polymerases I and III subunit RPAC2 (rpc19) from Schizosaccharomyces pombe (strain 972 / ATCC 24843) (Fission yeast).